Here is a 141-residue protein sequence, read N- to C-terminus: Zinc finger protein 593 homolog (141 aa).

The tract at residues 1-32 (MGRYSGHGGTHTKKKQYKRARSTKNRAKDIDQ) is disordered. The span at 10–25 (THTKKKQYKRARSTKN) shows a compositional bias: basic residues. The C2H2-type zinc-finger motif lies at 60-84 (NYCIHCSKHFVTNEDLQSHIKGKPH).

The protein belongs to the ZNF593/BUD20 C2H2-type zinc-finger protein family. In terms of assembly, associates with pre-60S ribosomal particles; released from the pre-60S particle very early in the cytoplasm.

It localises to the nucleus. The protein localises to the cytoplasm. In terms of biological role, involved in pre-60S ribosomal particles maturation by promoting the nuclear export of the 60S ribosome. This chain is Zinc finger protein 593 homolog, found in Dictyostelium discoideum (Social amoeba).